A 332-amino-acid chain; its full sequence is uncharacterized protein (332 aa).

This is an uncharacterized protein from Schizosaccharomyces pombe (strain 972 / ATCC 24843) (Fission yeast).